The chain runs to 255 residues: 4-hydroxy-tetrahydrodipicolinate reductase (255 aa).

Residues 9-14 (GFKGKM), aspartate 35, 89-91 (GTT), and 115-118 (APNF) contribute to the NAD(+) site. Residue histidine 145 is the Proton donor/acceptor of the active site. Histidine 146 is a (S)-2,3,4,5-tetrahydrodipicolinate binding site. The Proton donor role is filled by lysine 149. 155–156 (GT) contributes to the (S)-2,3,4,5-tetrahydrodipicolinate binding site.

The protein belongs to the DapB family.

The protein resides in the cytoplasm. It carries out the reaction (S)-2,3,4,5-tetrahydrodipicolinate + NAD(+) + H2O = (2S,4S)-4-hydroxy-2,3,4,5-tetrahydrodipicolinate + NADH + H(+). The enzyme catalyses (S)-2,3,4,5-tetrahydrodipicolinate + NADP(+) + H2O = (2S,4S)-4-hydroxy-2,3,4,5-tetrahydrodipicolinate + NADPH + H(+). The protein operates within amino-acid biosynthesis; L-lysine biosynthesis via DAP pathway; (S)-tetrahydrodipicolinate from L-aspartate: step 4/4. Its function is as follows. Catalyzes the conversion of 4-hydroxy-tetrahydrodipicolinate (HTPA) to tetrahydrodipicolinate. This is 4-hydroxy-tetrahydrodipicolinate reductase from Streptococcus pneumoniae (strain 70585).